A 265-amino-acid chain; its full sequence is Seminal vesicle secretory protein 3A (265 aa).

The first 20 residues, 1–20 (MKSIFFSLSLLLLLEKKAAG), serve as a signal peptide directing secretion. Tandem repeats lie at residues 116-119 (QIKS), 122-125 (QVKS), 129-132 (QLKS), 136-139 (QLKT), and 142-145 (QVKS). A 5 X 4 AA tandem repeats of Q-X-K-[ST] region spans residues 116 to 145 (QIKSQTQVKSYAAQLKSQPGQLKTIGQVKS).

In terms of processing, glycosylated. Covalently cross-linked by transglutaminase, which is important for the formation of the gelatinous copulatory plug. Five repeats of Q-X-K-(S/T) in the central region of the protein serve as the transglutaminase substrate site(s). As to expression, highly expressed in the seminal vesicle where it is detected in luminal epithelium of the mucosa folds, and also in luminal fluid (at protein level). Not detected in other tissues tested.

Its subcellular location is the secreted. Component of the copulatory plug. In Mus musculus (Mouse), this protein is Seminal vesicle secretory protein 3A.